Here is a 311-residue protein sequence, read N- to C-terminus: Bifunctional protein FolD (311 aa).

174 to 176 contributes to the NADP(+) binding site; the sequence is GKG.

The protein belongs to the tetrahydrofolate dehydrogenase/cyclohydrolase family. In terms of assembly, homodimer.

It carries out the reaction (6R)-5,10-methylene-5,6,7,8-tetrahydrofolate + NADP(+) = (6R)-5,10-methenyltetrahydrofolate + NADPH. The enzyme catalyses (6R)-5,10-methenyltetrahydrofolate + H2O = (6R)-10-formyltetrahydrofolate + H(+). The protein operates within one-carbon metabolism; tetrahydrofolate interconversion. In terms of biological role, catalyzes the oxidation of 5,10-methylenetetrahydrofolate to 5,10-methenyltetrahydrofolate and then the hydrolysis of 5,10-methenyltetrahydrofolate to 10-formyltetrahydrofolate. This Pyrobaculum neutrophilum (strain DSM 2338 / JCM 9278 / NBRC 100436 / V24Sta) (Thermoproteus neutrophilus) protein is Bifunctional protein FolD.